The sequence spans 383 residues: S-(hydroxymethyl)glutathione dehydrogenase (383 aa).

Cys-51 is a binding site for Zn(2+). Residue His-52 coordinates NAD(+). 7 residues coordinate Zn(2+): His-73, Glu-74, Cys-103, Cys-106, Cys-109, Cys-117, and Cys-180. NAD(+) is bound by residues 205–210 (GAGCVG), Asp-229, and 298–300 (IGV).

It belongs to the zinc-containing alcohol dehydrogenase family. Class-III subfamily. Zn(2+) is required as a cofactor.

The enzyme catalyses a primary alcohol + NAD(+) = an aldehyde + NADH + H(+). It catalyses the reaction a secondary alcohol + NAD(+) = a ketone + NADH + H(+). The catalysed reaction is S-(hydroxymethyl)glutathione + NADP(+) = S-formylglutathione + NADPH + H(+). It carries out the reaction S-(hydroxymethyl)glutathione + NAD(+) = S-formylglutathione + NADH + H(+). The enzyme catalyses S-nitrosoglutathione + NADH + H(+) = S-(hydroxysulfenamide)glutathione + NAD(+). Its function is as follows. Oxidizes long-chain alcohols and, in the presence of glutathione, is able to oxidize formaldehyde. Also acts as a S-nitroso-glutathione reductase by catalyzing the NADH-dependent reduction of S-nitrosoglutathione, thereby regulating protein S-nitrosylation. This is S-(hydroxymethyl)glutathione dehydrogenase (FDH1) from Aspergillus oryzae (strain ATCC 42149 / RIB 40) (Yellow koji mold).